We begin with the raw amino-acid sequence, 537 residues long: Caspase recruitment domain-containing protein 8 (537 aa).

Basic and acidic residues predominate over residues 1–23 (MEKKECPEKSSSSEEELPRRDSG). Disordered regions lie at residues 1-28 (MEKK…SRNI) and 113-133 (GDIP…SGDI). A ZU5 region spans residues 161–296 (FLGPEGNVDV…FYAVLESPSF (136 aa)). In terms of domain architecture, FIIND spans 161–446 (FLGPEGNVDV…LQLVAASAPP (286 aa)). A UPA region spans residues 297-446 (SLMGILLRIA…LQLVAASAPP (150 aa)). The region spanning 446-536 (PPFSGAAFVK…YLVSYLRQQN (91 aa)) is the CARD domain.

As to quaternary structure, interacts with DPP9; leading to inhibit activation of the inflammasome. DPP9 acts via formation of a ternary complex, composed of a DPP9 homodimer, one full-length CARD8 protein, and one cleaved C-terminus of CARD8 (Caspase recruitment domain-containing protein 8, C-terminus). Interacts with DPP8; leading to inhibit activation of the inflammasome, probably via formation of a ternary complex with DPP8. Interacts with NLRP3. Interacts with IKBKG/NEMO. Interacts with DRAL. Binds to caspase-1 (CASP1), CARD16/pseudo-ICE and CARD18/ICEBERG. Interacts with NLRP2 (via NACHT domain). In terms of assembly, interacts with the C-terminal part of CARD8 (Caspase recruitment domain-containing protein 8, C-terminus) in absence of pathogens and other damage-associated signals. Interacts with the N-terminal part of CARD8 (Caspase recruitment domain-containing protein 8, N-terminus) in absence of pathogens and other damage-associated signals. Homomultimer; forms the CARD8 inflammasome polymeric complex, a filament composed of homopolymers of this form in response to pathogens and other damage-associated signals. The CARD8 inflammasome polymeric complex directly recruits pro-caspase-1 (proCASP1) independently of PYCARD/ASC. Interacts (via CARD domain) with CASP1 (via CARD domain); leading to CASP1 activation. Undergoes autocatalytic processing within the FIIND domain to generate the N-terminal and C-terminal parts, which are associated non-covalently in absence of pathogens and other damage-associated signals. In terms of processing, ubiquitinated by the N-end rule pathway in response to pathogens and other damage-associated signals, leading to its degradation by the proteasome and subsequent release of the cleaved C-terminal part of the protein (Caspase recruitment domain-containing protein 8, C-terminus), which polymerizes and forms the CARD8 inflammasome. Post-translationally, (Microbial infection) Proteolytic cleavage by HIV-1 protease in the disordered region and within the ZU5 region of the FIIND domain promotes ubiquitination of the N-terminal part by the N-end rule pathway and degradation by the proteasome, releasing the cleaved C-terminal part of the protein (Caspase recruitment domain-containing protein 8, C-terminus), which polymerizes and forms the CARD8 inflammasome. Undergoes less autocatalytic processing within the FIIND domain compared to isoform 5. High expression in lung, ovary, testis and placenta. Lower expression in heart, kidney and liver. Also expressed in spleen, lymph node and bone marrow.

The protein resides in the cytoplasm. It is found in the nucleus. Its subcellular location is the inflammasome. CARD8 inflammasome is activated by HIV-1 protease activity: HIV-1 protease cleaves CARD8, promoting ubiquitination and degradation of the N-terminal part, releasing the cleaved C-terminal part of the protein (Caspase recruitment domain-containing protein 8, C-terminus), which polymerizes and forms the CARD8 inflammasome. CARD8 inflammasome is inhibited by DPP8 and DPP9, which sequester the C-terminal fragment of CARD8 (Caspase recruitment domain-containing protein 8, C-terminus) in a ternary complex, thereby preventing CARD8 oligomerization and activation. CARD8 inflammasome is activated by Val-boroPro (Talabostat, PT-100), an inhibitor of dipeptidyl peptidases DPP8 and DPP9. Val-boroPro relieves inhibition of DPP8 and/or DPP9 by inducing the proteasome-mediated destruction of the N-terminal part of CARD8, releasing its C-terminal part from autoinhibition. Indirectly activated by the pseudodipeptide CQ31. CQ31 directly inactivates the peptidases PEPD and XPNPEP1, leading to an accumulation of dipeptides that weaky inhibit DDP8 and DPP9, relieving DPP8- and/or DPP9-mediated inhibition of CARD8. Inflammasome sensor, which mediates inflammasome activation in response to various pathogen-associated signals, leading to subsequent pyroptosis of CD4(+) T-cells and macrophages. Inflammasomes are supramolecular complexes that assemble in the cytosol in response to pathogens and other damage-associated signals and play critical roles in innate immunity and inflammation. Acts as a recognition receptor (PRR): recognizes specific pathogens and other damage-associated signals, such as HIV-1 protease activity or Val-boroPro inhibitor, and mediates CARD8 inflammasome activation. In response to pathogen-associated signals, the N-terminal part of CARD8 is degraded by the proteasome, releasing the cleaved C-terminal part of the protein (Caspase recruitment domain-containing protein 8, C-terminus), which polymerizes to initiate the formation of the inflammasome complex: the CARD8 inflammasome directly recruits pro-caspase-1 (proCASP1) independently of PYCARD/ASC and promotes caspase-1 (CASP1) activation, which subsequently cleaves and activates inflammatory cytokines IL1B and IL18 and gasdermin-D (GSDMD), leading to pyroptosis. Ability to sense HIV-1 protease activity leads to the clearance of latent HIV-1 in patient CD4(+) T-cells after viral reactivation; in contrast, HIV-1 can evade CARD8-sensing when its protease remains inactive in infected cells prior to viral budding. Also acts as a negative regulator of the NLRP3 inflammasome. May also act as an inhibitor of NF-kappa-B activation. Functionally, constitutes the precursor of the CARD8 inflammasome, which mediates autoproteolytic processing within the FIIND domain to generate the N-terminal and C-terminal parts, which are associated non-covalently in absence of pathogens and other damage-associated signals. Its function is as follows. Regulatory part that prevents formation of the CARD8 inflammasome: in absence of pathogens and other damage-associated signals, interacts with the C-terminal part of CARD8 (Caspase recruitment domain-containing protein 8, C-terminus), preventing activation of the CARD8 inflammasome. In response to pathogen-associated signals, this part is ubiquitinated by the N-end rule pathway and degraded by the proteasome, releasing the cleaved C-terminal part of the protein, which polymerizes and forms the CARD8 inflammasome. In terms of biological role, constitutes the active part of the CARD8 inflammasome. In absence of pathogens and other damage-associated signals, interacts with the N-terminal part of CARD8 (Caspase recruitment domain-containing protein 8, N-terminus), preventing activation of the CARD8 inflammasome. In response to pathogen-associated signals, the N-terminal part of CARD8 is degraded by the proteasome, releasing this form, which polymerizes to form the CARD8 inflammasome complex: the CARD8 inflammasome complex then directly recruits pro-caspase-1 (proCASP1) and promotes caspase-1 (CASP1) activation, leading to gasdermin-D (GSDMD) cleavage and subsequent pyroptosis. In Homo sapiens (Human), this protein is Caspase recruitment domain-containing protein 8.